The chain runs to 154 residues: 6,7-dimethyl-8-ribityllumazine synthase (154 aa).

Residues phenylalanine 26, 60–62 (ALE), and 84–86 (CII) each bind 5-amino-6-(D-ribitylamino)uracil. Position 89–90 (89–90 (ET)) interacts with (2S)-2-hydroxy-3-oxobutyl phosphate. Histidine 92 functions as the Proton donor in the catalytic mechanism. Asparagine 117 serves as a coordination point for 5-amino-6-(D-ribitylamino)uracil. Position 131 (arginine 131) interacts with (2S)-2-hydroxy-3-oxobutyl phosphate.

This sequence belongs to the DMRL synthase family.

The catalysed reaction is (2S)-2-hydroxy-3-oxobutyl phosphate + 5-amino-6-(D-ribitylamino)uracil = 6,7-dimethyl-8-(1-D-ribityl)lumazine + phosphate + 2 H2O + H(+). Its pathway is cofactor biosynthesis; riboflavin biosynthesis; riboflavin from 2-hydroxy-3-oxobutyl phosphate and 5-amino-6-(D-ribitylamino)uracil: step 1/2. Functionally, catalyzes the formation of 6,7-dimethyl-8-ribityllumazine by condensation of 5-amino-6-(D-ribitylamino)uracil with 3,4-dihydroxy-2-butanone 4-phosphate. This is the penultimate step in the biosynthesis of riboflavin. In Paracidovorax citrulli (strain AAC00-1) (Acidovorax citrulli), this protein is 6,7-dimethyl-8-ribityllumazine synthase.